The sequence spans 328 residues: Phosphate acyltransferase (328 aa).

Belongs to the PlsX family. As to quaternary structure, homodimer. Probably interacts with PlsY.

It is found in the cytoplasm. It catalyses the reaction a fatty acyl-[ACP] + phosphate = an acyl phosphate + holo-[ACP]. The protein operates within lipid metabolism; phospholipid metabolism. Functionally, catalyzes the reversible formation of acyl-phosphate (acyl-PO(4)) from acyl-[acyl-carrier-protein] (acyl-ACP). This enzyme utilizes acyl-ACP as fatty acyl donor, but not acyl-CoA. The chain is Phosphate acyltransferase from Campylobacter jejuni subsp. jejuni serotype O:6 (strain 81116 / NCTC 11828).